Consider the following 411-residue polypeptide: Peptidase T (411 aa).

Zn(2+) is bound at residue His78. Asp80 is a catalytic residue. Position 140 (Asp140) interacts with Zn(2+). The Proton acceptor role is filled by Glu173. Positions 174, 196, and 379 each coordinate Zn(2+).

The protein belongs to the peptidase M20B family. Zn(2+) serves as cofactor.

It is found in the cytoplasm. The catalysed reaction is Release of the N-terminal residue from a tripeptide.. Cleaves the N-terminal amino acid of tripeptides. The protein is Peptidase T of Yersinia pestis bv. Antiqua (strain Antiqua).